Here is a 189-residue protein sequence, read N- to C-terminus: Cytochrome bo(3) ubiquinol oxidase subunit 3 (189 aa).

Topologically, residues 1–10 (MIKETMRNNK) are cytoplasmic. A helical membrane pass occupies residues 11-31 (LFGLWIYLMSDCIIFAVLFAV). Residues 32–52 (YAIISSNFSTNLINHKIFNLS) are Extracellular-facing. Residues 53-73 (YVFLETLILLLSSLSSGMLTI) traverse the membrane as a helical segment. The Cytoplasmic portion of the chain corresponds to 74–81 (QKNKNNIK). A helical membrane pass occupies residues 82–102 (IIYFYLLLTFFLGLSFLLMEV). Over 103-122 (NEFYKLILENCSPSQHAFFS) the chain is Extracellular. The helical transmembrane segment at 123-143 (IFFTIVGVHGIHVFFGLIFIL) threads the bilayer. Topologically, residues 144–161 (SILYQLFYLGITNTIRIR) are cytoplasmic. Residues 162–182 (ILCFSLFWHFLDIIWICVFTF) traverse the membrane as a helical segment. Residues 183 to 189 (VYLNGVI) lie on the Extracellular side of the membrane.

This sequence belongs to the cytochrome c oxidase subunit 3 family. In terms of assembly, heterooctamer of two A chains, two B chains, two C chains and two D chains.

The protein localises to the cell membrane. Cytochrome bo(3) ubiquinol terminal oxidase is the component of the aerobic respiratory chain of E.coli that predominates when cells are grown at high aeration. Has proton pump activity across the membrane in addition to electron transfer, pumping 2 protons/electron. The protein is Cytochrome bo(3) ubiquinol oxidase subunit 3 (cyoC) of Buchnera aphidicola subsp. Schizaphis graminum (strain Sg).